A 541-amino-acid polypeptide reads, in one-letter code: T-complex protein 1 subunit epsilon (541 aa).

The residue at position 2 (Ala-2) is an N-acetylalanine. Lys-20 participates in a covalent cross-link: Glycyl lysine isopeptide (Lys-Gly) (interchain with G-Cter in SUMO2). Residue Ser-26 is modified to Phosphoserine. Gly-53 contacts ADP. Residue Gly-53 coordinates ATP. Asp-104 provides a ligand contact to Mg(2+). Positions 105, 106, 107, and 175 each coordinate ADP. Residues Thr-106 and Thr-107 each contribute to the ATP site. Glycyl lysine isopeptide (Lys-Gly) (interchain with G-Cter in SUMO2) cross-links involve residues Lys-210, Lys-214, Lys-265, Lys-275, and Lys-279. Phosphoserine is present on Ser-346. Residue Lys-392 forms a Glycyl lysine isopeptide (Lys-Gly) (interchain with G-Cter in SUMO2) linkage. Residues Gly-422, Asp-492, Glu-508, and Lys-513 each contribute to the ADP site. Residue Gly-422 participates in ATP binding. The residue at position 539 (Ser-539) is a Phosphoserine.

This sequence belongs to the TCP-1 chaperonin family. Component of the chaperonin-containing T-complex (TRiC), a hexadecamer composed of two identical back-to-back stacked rings enclosing a protein folding chamber. Each ring is made up of eight different subunits: TCP1/CCT1, CCT2, CCT3, CCT4, CCT5, CCT6A/CCT6, CCT7, CCT8. Interacts with PACRG. Interacts with DNAAF4. Interacts with DLEC1. Interacts with SPMAP2. Post-translationally, ubiquitinated by the DCX(DCAF12) complex specifically recognizes the diglutamate (Glu-Glu) at the C-terminus, leading to its degradation.

It is found in the cytoplasm. The protein resides in the cytoskeleton. It localises to the microtubule organizing center. The protein localises to the centrosome. It carries out the reaction ATP + H2O = ADP + phosphate + H(+). Component of the chaperonin-containing T-complex (TRiC), a molecular chaperone complex that assists the folding of actin, tubulin and other proteins upon ATP hydrolysis. The TRiC complex mediates the folding of WRAP53/TCAB1, thereby regulating telomere maintenance. As part of the TRiC complex may play a role in the assembly of BBSome, a complex involved in ciliogenesis regulating transports vesicles to the cilia. The protein is T-complex protein 1 subunit epsilon (Cct5) of Rattus norvegicus (Rat).